The sequence spans 461 residues: GTPase Der (461 aa).

EngA-type G domains follow at residues 3–167 and 190–371; these read PQVI…GEKQ and LKLA…AAWS. Residues 9-16, 56-60, 119-122, 196-203, 249-253, and 314-317 contribute to the GTP site; these read GRPNVGKS, DTAGW, NKAE, GRPNAGKS, DTAGM, and NKWD. One can recognise a KH-like domain in the interval 372 to 456; that stretch reads KRVPTAALNR…PIRLTLRSPK (85 aa).

It belongs to the TRAFAC class TrmE-Era-EngA-EngB-Septin-like GTPase superfamily. EngA (Der) GTPase family. As to quaternary structure, associates with the 50S ribosomal subunit.

GTPase that plays an essential role in the late steps of ribosome biogenesis. The sequence is that of GTPase Der from Novosphingobium aromaticivorans (strain ATCC 700278 / DSM 12444 / CCUG 56034 / CIP 105152 / NBRC 16084 / F199).